The sequence spans 252 residues: Major prion protein (252 aa).

The N-terminal stretch at 1–28 (MAHLGYWMLLLFVATWSDVGLCKKRPKP) is a signal peptide. The segment at 23-229 (KKRPKPGGGW…ESQAAYQRAA (207 aa)) is interaction with GRB2, ERI3 and SYN1. The disordered stretch occupies residues 26-109 (PKPGGGWNTG…KPSKPKTSMK (84 aa)). 5 repeat units span residues 51–59 (PPQGGGWGQ), 60–67 (PHGGGWGQ), 68–75 (PHGGGWGQ), 76–83 (PHGGGWGQ), and 84–92 (PHGGGWGQG). The 5 X 8 AA tandem repeats of P-H-G-G-G-W-G-Q stretch occupies residues 51 to 92 (PPQGGGWGQPHGGGWGQPHGGGWGQPHGGGWGQPHGGGWGQG). Residues 53–93 (QGGGWGQPHGGGWGQPHGGGWGQPHGGGWGQPHGGGWGQGG) are compositionally biased toward gly residues. Positions 61, 62, 63, 69, 70, 71, 77, 78, 79, 85, 86, and 87 each coordinate Cu(2+). Cys178 and Cys213 form a disulfide bridge. N-linked (GlcNAc...) asparagine glycosylation is found at Asn180 and Asn196. Ala229 carries the GPI-anchor amidated alanine lipid modification. The propeptide at 230 to 252 (GVLLFSSPPVILLISFLIFLIVG) is removed in mature form.

Belongs to the prion family. Monomer and homodimer. Has a tendency to aggregate into amyloid fibrils containing a cross-beta spine, formed by a steric zipper of superposed beta-strands. Soluble oligomers may represent an intermediate stage on the path to fibril formation. Copper binding may promote oligomerization. Interacts with GRB2, APP, ERI3/PRNPIP and SYN1. Mislocalized cytosolically exposed PrP interacts with MGRN1; this interaction alters MGRN1 subcellular location and causes lysosomal enlargement. Interacts with KIAA1191.

It is found in the cell membrane. It localises to the golgi apparatus. Its function is as follows. Its primary physiological function is unclear. Has cytoprotective activity against internal or environmental stresses. May play a role in neuronal development and synaptic plasticity. May be required for neuronal myelin sheath maintenance. May play a role in iron uptake and iron homeostasis. Soluble oligomers are toxic to cultured neuroblastoma cells and induce apoptosis (in vitro). Association with GPC1 (via its heparan sulfate chains) targets PRNP to lipid rafts. Also provides Cu(2+) or Zn(2+) for the ascorbate-mediated GPC1 deaminase degradation of its heparan sulfate side chains. In Oryctolagus cuniculus (Rabbit), this protein is Major prion protein (PRNP).